The chain runs to 227 residues: Orotidine 5'-phosphate decarboxylase (227 aa).

Residues aspartate 8, lysine 30, 59-68 (DLKLYDIPYT), threonine 118, arginine 178, glutamine 187, glycine 207, and arginine 208 contribute to the substrate site. Lysine 61 functions as the Proton donor in the catalytic mechanism.

Belongs to the OMP decarboxylase family. Type 1 subfamily. As to quaternary structure, homodimer.

It carries out the reaction orotidine 5'-phosphate + H(+) = UMP + CO2. The protein operates within pyrimidine metabolism; UMP biosynthesis via de novo pathway; UMP from orotate: step 2/2. Catalyzes the decarboxylation of orotidine 5'-monophosphate (OMP) to uridine 5'-monophosphate (UMP). This Helicobacter pylori (strain ATCC 700392 / 26695) (Campylobacter pylori) protein is Orotidine 5'-phosphate decarboxylase.